Consider the following 339-residue polypeptide: 2-halobenzoate 1,2-dioxygenase electron transfer component (339 aa).

A 2Fe-2S ferredoxin-type domain is found at 3-96 (HSIALRFEDD…DCVVRILASS (94 aa)). Positions 40, 45, 48, and 80 each coordinate [2Fe-2S] cluster. The interval 98–336 (ACQVKKSTMT…NFYFEKFAPT (239 aa)) is ferredoxin-reductase. An FAD-binding FR-type domain is found at 103–203 (KSTMTGQMTE…DGPYGAFYLR (101 aa)).

Belongs to the bacterial ring-hydroxylating dioxygenase ferredoxin reductase family. As to quaternary structure, monomer. It is part of 2-halobenzoate dioxygenase two component enzyme system. The other component is a dioxygenase component consisting of 3 large (CbdA) subunits and 3 small (CbdB) subunits. It depends on FAD as a cofactor. The cofactor is [2Fe-2S] cluster.

It carries out the reaction 2 reduced [2Fe-2S]-[ferredoxin] + NAD(+) + H(+) = 2 oxidized [2Fe-2S]-[ferredoxin] + NADH. Its pathway is xenobiotic degradation; benzoate degradation via CoA ligation. Electron transfer component of 2-halobenzoate 1,2-dioxygenase system. The polypeptide is 2-halobenzoate 1,2-dioxygenase electron transfer component (cbdC) (Burkholderia cepacia (Pseudomonas cepacia)).